Here is a 456-residue protein sequence, read N- to C-terminus: tRNA modification GTPase MnmE (456 aa).

Residues Arg-25, Glu-82, and Lys-121 each contribute to the (6S)-5-formyl-5,6,7,8-tetrahydrofolate site. The TrmE-type G domain occupies 217–379 (GMKVVIAGRP…LKAHLKSVMG (163 aa)). Asn-227 lines the K(+) pocket. GTP contacts are provided by residues 227-232 (NAGKSS), 246-252 (TNIAGTT), and 271-274 (DTAG). Ser-231 contacts Mg(2+). The K(+) site is built by Thr-246, Ile-248, and Thr-251. Position 252 (Thr-252) interacts with Mg(2+). A (6S)-5-formyl-5,6,7,8-tetrahydrofolate-binding site is contributed by Lys-456.

This sequence belongs to the TRAFAC class TrmE-Era-EngA-EngB-Septin-like GTPase superfamily. TrmE GTPase family. As to quaternary structure, homodimer. Heterotetramer of two MnmE and two MnmG subunits. It depends on K(+) as a cofactor.

The protein localises to the cytoplasm. In terms of biological role, exhibits a very high intrinsic GTPase hydrolysis rate. Involved in the addition of a carboxymethylaminomethyl (cmnm) group at the wobble position (U34) of certain tRNAs, forming tRNA-cmnm(5)s(2)U34. The sequence is that of tRNA modification GTPase MnmE from Saccharophagus degradans (strain 2-40 / ATCC 43961 / DSM 17024).